Reading from the N-terminus, the 304-residue chain is Dermonecrotic toxin LlSicTox-betaIA1 (304 aa).

The signal sequence occupies residues 1–21 (MLLSAVISFIGFAAFLQEANG). Positions 22 to 26 (HVVER) are excised as a propeptide. Histidine 38 is an active-site residue. Positions 58 and 60 each coordinate Mg(2+). Catalysis depends on histidine 74, which acts as the Nucleophile. Cystine bridges form between cysteine 78–cysteine 84 and cysteine 80–cysteine 223. Aspartate 118 is a Mg(2+) binding site.

This sequence belongs to the arthropod phospholipase D family. Class II subfamily. Class IIb sub-subfamily. Mg(2+) serves as cofactor. As to expression, expressed by the venom gland.

It is found in the secreted. It carries out the reaction an N-(acyl)-sphingosylphosphocholine = an N-(acyl)-sphingosyl-1,3-cyclic phosphate + choline. The enzyme catalyses an N-(acyl)-sphingosylphosphoethanolamine = an N-(acyl)-sphingosyl-1,3-cyclic phosphate + ethanolamine. The catalysed reaction is a 1-acyl-sn-glycero-3-phosphocholine = a 1-acyl-sn-glycero-2,3-cyclic phosphate + choline. It catalyses the reaction a 1-acyl-sn-glycero-3-phosphoethanolamine = a 1-acyl-sn-glycero-2,3-cyclic phosphate + ethanolamine. Functionally, dermonecrotic toxins cleave the phosphodiester linkage between the phosphate and headgroup of certain phospholipids (sphingolipid and lysolipid substrates), forming an alcohol (often choline) and a cyclic phosphate. This toxin acts on sphingomyelin (SM) with low activity. It may also act on ceramide phosphoethanolamine (CPE), lysophosphatidylcholine (LPC) and lysophosphatidylethanolamine (LPE), but not on lysophosphatidylserine (LPS), and lysophosphatidylglycerol (LPG). It acts by transphosphatidylation, releasing exclusively cyclic phosphate products as second products. Induces hemolysis, dermonecrosis, and edema. Also induces platelet aggregation. This chain is Dermonecrotic toxin LlSicTox-betaIA1, found in Loxosceles laeta (South American recluse spider).